Consider the following 285-residue polypeptide: Aquaporin-6 (285 aa).

3 consecutive transmembrane segments (helical) span residues 36–56 (IFWKSIRAELIGSLVLMVFSC), 76–96 (YCFKSISAHFNPVITIAALLL), and 105–125 (ISLVLAQTLGTLSGASVCYYG). The NPA 1 motif lies at 86–88 (NPV). Asparagine 128 carries an N-linked (GlcNAc...) asparagine glycan. A run of 2 helical transmembrane segments spans residues 143–163 (VSPAKGFGYEFFGTFVIILTM) and 177–197 (GDSNLLPLIFGLSVGLSSGMA). Positions 206 to 208 (NPM) match the NPA 2 motif. The helical transmembrane segment at 225–245 (YIYWIGPIFGCLLAVFTFDYT) threads the bilayer.

It belongs to the MIP/aquaporin (TC 1.A.8) family.

The protein localises to the cell membrane. Its function is as follows. Probable water-specific aquaporin that may modulate the water content and osmolytes during anhydrobiosis. The protein is Aquaporin-6 of Milnesium tardigradum (Water bear).